A 382-amino-acid chain; its full sequence is Exostosin-1 homolog (382 aa).

The N-terminal stretch at Met1 to Leu20 is a signal peptide. A glycan (N-linked (GlcNAc...) asparagine) is linked at Asn268.

This sequence belongs to the glycosyltransferase 47 family. In terms of assembly, interacts with rib-2.

It localises to the endoplasmic reticulum. The protein resides in the golgi apparatus. Required for the biosynthesis of heparan sulfate by positively regulating N-acetylglucosamine transferase II (GlcNAcT-II) and glucuronyl transferase II (GlcAT-II) activities of glycosyltransferase rib-2. Probably not directly involved in chondroitin sulfate biosynthesis but negatively regulates chondroitin sulfate levels. Maternally required for normal ventral epidermal enclosure and for embryo elongation during the early stages of embryonic development. In addition, involved in the elongation of the pharyngeal isthmus and in the organization of the actin cytoskeleton in the pharyngeal muscles during the later stages embryonic development. In adults, regulates egg-laying and the normal morphogenesis of the vulva. Also involved in the directed migration of hermaphrodite-specific neurons. In Caenorhabditis elegans, this protein is Exostosin-1 homolog (rib-1).